The following is a 146-amino-acid chain: Probable flagellum biosynthesis repressor protein FlbT 1 (146 aa).

It belongs to the FlbT family.

Its function is as follows. Has a post-transcriptional repressor function in flagellum biogenesis. Associates with the 5'-UTR of fljK mRNA and promotes its degradation. The chain is Probable flagellum biosynthesis repressor protein FlbT 1 from Bradyrhizobium diazoefficiens (strain JCM 10833 / BCRC 13528 / IAM 13628 / NBRC 14792 / USDA 110).